The primary structure comprises 1090 residues: Protein unc-13 homolog D (1090 aa).

Positions 92-239 (EPEEHQQTLQ…FKEARKDKGQ (148 aa)) constitute a C2 1 domain. Ca(2+) contacts are provided by aspartate 127 and aspartate 133. Serine 150 is modified (phosphoserine). Aspartate 206 and aspartate 208 together coordinate Ca(2+). Positions 240–543 (DDFLGNVVLR…AKRVQDHTTV (304 aa)) are interaction with RAB27A. An MHD1 domain is found at 557–677 (FQLYISLKEL…RLALVYCSLI (121 aa)). The MHD2 domain occupies 788–895 (EDAILPLMKF…ASSRELIRKY (108 aa)). The region spanning 910–1035 (ELGAVTVKAS…PGLSGSEEPG (126 aa)) is the C2 2 domain. Positions 940, 941, 947, 1005, 1007, and 1013 each coordinate Ca(2+). Positions 1026 to 1048 (PGLSGSEEPGEVPQTRLPLTYPA) are disordered.

This sequence belongs to the unc-13 family. In terms of assembly, interacts with DOC2A. Interacts with RAB27A. Interacts with RHOG; the interaction increases RhoG affinity to the membrane lipids, targets UNC13D to membrane lipids and facilitates cytotoxic granule (CG) docking to the plasma membrane. It depends on Ca(2+) as a cofactor. Expressed at high levels in spleen, thymus and leukocytes. Also expressed in lung and placenta, and at very low levels in brain, heart, skeletal muscle and kidney. Expressed in cytotoxic T-lymphocytes (CTL) and mast cells.

The protein localises to the cytoplasm. It is found in the membrane. Its subcellular location is the late endosome. It localises to the recycling endosome. The protein resides in the lysosome. In terms of biological role, plays a role in cytotoxic granule exocytosis in lymphocytes. Required for both granule maturation and granule docking and priming at the immunologic synapse. Regulates assembly of recycling and late endosomal structures, leading to the formation of an endosomal exocytic compartment that fuses with perforin-containing granules at the immunologic synapse and licences them for exocytosis. Regulates Ca(2+)-dependent secretory lysosome exocytosis in mast cells. This chain is Protein unc-13 homolog D (UNC13D), found in Homo sapiens (Human).